The following is a 505-amino-acid chain: Maturase K (505 aa).

Belongs to the intron maturase 2 family. MatK subfamily.

It localises to the plastid. Its subcellular location is the chloroplast. Its function is as follows. Usually encoded in the trnK tRNA gene intron. Probably assists in splicing its own and other chloroplast group II introns. This is Maturase K from Calycanthus occidentalis (Spice bush).